Here is a 222-residue protein sequence, read N- to C-terminus: Superoxide dismutase [Mn], mitochondrial (222 aa).

Residues Met-1 to Gln-24 constitute a mitochondrion transit peptide. Residue His-50 coordinates Mn(2+). Residue Tyr-58 is modified to 3'-nitrotyrosine. Residues Lys-68 and Lys-75 each carry the N6-acetyllysine; alternate modification. Lys-68 and Lys-75 each carry N6-succinyllysine; alternate. Residue His-98 participates in Mn(2+) binding. An N6-acetyllysine modification is found at Lys-114. An N6-acetyllysine; alternate mark is found at Lys-122 and Lys-130. 2 positions are modified to N6-succinyllysine; alternate: Lys-122 and Lys-130. The Mn(2+) site is built by Asp-183 and His-187. N6-acetyllysine is present on Lys-202.

Belongs to the iron/manganese superoxide dismutase family. Homotetramer. It depends on Mn(2+) as a cofactor. Nitrated under oxidative stress. Nitration coupled with oxidation inhibits the catalytic activity. Post-translationally, acetylation at Lys-122 decreases enzymatic activity. Deacetylated by SIRT3 upon exposure to ionizing radiations or after long fasting. In terms of processing, polyubiquitinated; leading to proteasomal degradation. Deubiquitinated by USP36 which increases protein stability.

It localises to the mitochondrion matrix. The enzyme catalyses 2 superoxide + 2 H(+) = H2O2 + O2. In terms of biological role, destroys superoxide anion radicals which are normally produced within the cells and which are toxic to biological systems. The protein is Superoxide dismutase [Mn], mitochondrial (SOD2) of Pongo pygmaeus (Bornean orangutan).